The chain runs to 68 residues: UPF0253 protein ASA_2184 (68 aa).

This sequence belongs to the UPF0253 family.

The protein is UPF0253 protein ASA_2184 of Aeromonas salmonicida (strain A449).